Consider the following 68-residue polypeptide: MAITPDKQKKEQQHQPQNGPLDYAHICKCIAMFFVVAGVVLMFFETGLDPEQKEQIKRLHQLDGIPHA.

A helical membrane pass occupies residues 24-44 (AHICKCIAMFFVVAGVVLMFF).

Its subcellular location is the endoplasmic reticulum. It is found in the membrane. This is an uncharacterized protein from Saccharomyces cerevisiae (strain ATCC 204508 / S288c) (Baker's yeast).